Here is a 238-residue protein sequence, read N- to C-terminus: Ribonuclease 3 (238 aa).

The RNase III domain occupies 11 to 136; that stretch reads RARLEAAIGY…LIAAIYLDGG (126 aa). Residue glutamate 49 coordinates Mg(2+). The active site involves aspartate 53. Positions 122 and 125 each coordinate Mg(2+). The active site involves glutamate 125. In terms of domain architecture, DRBM spans 161-230; that stretch reads DAKTELQEWA…AMKLLEREGV (70 aa).

It belongs to the ribonuclease III family. Homodimer. Requires Mg(2+) as cofactor.

It localises to the cytoplasm. It carries out the reaction Endonucleolytic cleavage to 5'-phosphomonoester.. In terms of biological role, digests double-stranded RNA. Involved in the processing of primary rRNA transcript to yield the immediate precursors to the large and small rRNAs (23S and 16S). Processes some mRNAs, and tRNAs when they are encoded in the rRNA operon. Processes pre-crRNA and tracrRNA of type II CRISPR loci if present in the organism. The chain is Ribonuclease 3 from Rhizobium meliloti (strain 1021) (Ensifer meliloti).